A 504-amino-acid chain; its full sequence is Catalase (504 aa).

Residues 1-21 (MQMSKSFLLITVGLASTSLQA) form the signal peptide. Active-site residues include His72 and Asn145. Tyr353 contributes to the heme binding site.

Belongs to the catalase family. Requires heme as cofactor.

It is found in the periplasm. It carries out the reaction 2 H2O2 = O2 + 2 H2O. In terms of biological role, decomposes hydrogen peroxide into water and oxygen; serves to protect cells from the toxic effects of hydrogen peroxide. The sequence is that of Catalase from Vibrio parahaemolyticus serotype O3:K6 (strain RIMD 2210633).